A 193-amino-acid polypeptide reads, in one-letter code: Large ribosomal subunit protein uL5 (193 aa).

It belongs to the universal ribosomal protein uL5 family. As to quaternary structure, part of the 50S ribosomal subunit; part of the 5S rRNA/L5/L18/L25 subcomplex. Contacts the 5S rRNA and the P site tRNA. Forms a bridge to the 30S subunit in the 70S ribosome.

Functionally, this is one of the proteins that bind and probably mediate the attachment of the 5S RNA into the large ribosomal subunit, where it forms part of the central protuberance. In the 70S ribosome it contacts protein S13 of the 30S subunit (bridge B1b), connecting the 2 subunits; this bridge is implicated in subunit movement. Contacts the P site tRNA; the 5S rRNA and some of its associated proteins might help stabilize positioning of ribosome-bound tRNAs. The sequence is that of Large ribosomal subunit protein uL5 from Renibacterium salmoninarum (strain ATCC 33209 / DSM 20767 / JCM 11484 / NBRC 15589 / NCIMB 2235).